Here is a 114-residue protein sequence, read N- to C-terminus: Fumarate reductase subunit D (114 aa).

Transmembrane regions (helical) follow at residues 25 to 45 (SGLA…FGII), 50 to 70 (IIAF…TIFP), and 94 to 114 (LIFY…VIAI).

The protein belongs to the FrdD family. In terms of assembly, part of an enzyme complex containing four subunits: a flavoprotein (FrdA), an iron-sulfur protein (FrdB), and two hydrophobic anchor proteins (FrdC and FrdD).

Its subcellular location is the cell inner membrane. Functionally, anchors the catalytic components of the fumarate reductase complex to the cell membrane, binds quinones. This chain is Fumarate reductase subunit D, found in Mannheimia succiniciproducens (strain KCTC 0769BP / MBEL55E).